A 232-amino-acid polypeptide reads, in one-letter code: Orotidine 5'-phosphate decarboxylase (232 aa).

Substrate contacts are provided by residues Asp11, Lys32, 59–68, Thr118, Arg180, Gln189, Gly209, and Arg210; that span reads DLKFHDIPNT. The Proton donor role is filled by Lys61.

This sequence belongs to the OMP decarboxylase family. Type 1 subfamily. In terms of assembly, homodimer.

The catalysed reaction is orotidine 5'-phosphate + H(+) = UMP + CO2. It functions in the pathway pyrimidine metabolism; UMP biosynthesis via de novo pathway; UMP from orotate: step 2/2. In terms of biological role, catalyzes the decarboxylation of orotidine 5'-monophosphate (OMP) to uridine 5'-monophosphate (UMP). This Gloeothece citriformis (strain PCC 7424) (Cyanothece sp. (strain PCC 7424)) protein is Orotidine 5'-phosphate decarboxylase.